The sequence spans 426 residues: Glutamate-1-semialdehyde 2,1-aminomutase (426 aa).

Lys-265 carries the post-translational modification N6-(pyridoxal phosphate)lysine.

This sequence belongs to the class-III pyridoxal-phosphate-dependent aminotransferase family. HemL subfamily. As to quaternary structure, homodimer. Pyridoxal 5'-phosphate is required as a cofactor.

It is found in the cytoplasm. The catalysed reaction is (S)-4-amino-5-oxopentanoate = 5-aminolevulinate. It functions in the pathway porphyrin-containing compound metabolism; protoporphyrin-IX biosynthesis; 5-aminolevulinate from L-glutamyl-tRNA(Glu): step 2/2. The chain is Glutamate-1-semialdehyde 2,1-aminomutase from Halorhodospira halophila (strain DSM 244 / SL1) (Ectothiorhodospira halophila (strain DSM 244 / SL1)).